We begin with the raw amino-acid sequence, 207 residues long: dTTP/UTP pyrophosphatase (207 aa).

Residue aspartate 87 is the Proton acceptor of the active site.

The protein belongs to the Maf family. YhdE subfamily. A divalent metal cation serves as cofactor.

It is found in the cytoplasm. The catalysed reaction is dTTP + H2O = dTMP + diphosphate + H(+). The enzyme catalyses UTP + H2O = UMP + diphosphate + H(+). Nucleoside triphosphate pyrophosphatase that hydrolyzes dTTP and UTP. May have a dual role in cell division arrest and in preventing the incorporation of modified nucleotides into cellular nucleic acids. The polypeptide is dTTP/UTP pyrophosphatase (Nitrosomonas europaea (strain ATCC 19718 / CIP 103999 / KCTC 2705 / NBRC 14298)).